Consider the following 1948-residue polypeptide: Chromodomain-helicase-DNA-binding protein 5 (1948 aa).

Disordered regions lie at residues 1-136, 228-268, and 281-336; these read MRGP…SGQL, SPQQ…GRGK, and SKRK…GDGY. Acidic residues-rich tracts occupy residues 17–37 and 71–89; these read EEME…EGFE and NDEL…ESEG. Composition is skewed to basic residues over residues 95 to 114 and 250 to 268; these read TKKK…KRKK and GVRK…GRGK. Over residues 289–299 the composition is skewed to acidic residues; sequence SEEDEPEDSDL. Over residues 319–328 the composition is skewed to basic residues; that stretch reads KKNKRRRKKK. 2 PHD-type zinc fingers span residues 341–388 and 414–461; these read QDYC…CEKE and MEFC…CTCP. Positions 341-651 are histone-binding; it reads QDYCEVCQQG…HRELMLGEDA (311 aa). Residues 495–552 form the Chromo 1 domain; sequence MPPPRPLEGIPEREFFVKWAGLSYWHCSWVKELQLELYHTVMYRNYQRKNDMDEPPPF. The segment at 547-569 is disordered; the sequence is DEPPPFDYGSGDEDGKSEKRKNK. A compositionally biased stretch (basic and acidic residues) spans 559 to 569; that stretch reads EDGKSEKRKNK. Positions 590–651 constitute a Chromo 2 domain; the sequence is MMVHRILNHS…HRELMLGEDA (62 aa). The 185-residue stretch at 710–894 folds into the Helicase ATP-binding domain; sequence RFSWAQGTDT…FHLLNFLTPE (185 aa). 723 to 730 lines the ATP pocket; the sequence is DEMGLGKT. The DEAH box motif lies at 845 to 848; that stretch reads DEAH. The region spanning 1026–1191 is the Helicase C-terminal domain; sequence LLQKMLKKLR…MTKQELDDIL (166 aa). 4 disordered regions span residues 1206-1250, 1349-1409, 1521-1566, and 1595-1692; these read MMSQ…VEDS, YNDA…LPPL, KYST…LPDK, and TALD…EDKN. Acidic residues-rich tracts occupy residues 1353 to 1364 and 1374 to 1383; these read SQEDQEWQDELS and SEDEDEDFEE. Gln1388 is modified (N5-methylglutamine). Residues 1547 to 1561 are compositionally biased toward pro residues; sequence TPVPASPAQLPPAPL. Position 1552 is a phosphoserine (Ser1552). 3 stretches are compositionally biased toward basic and acidic residues: residues 1598–1625, 1633–1650, and 1657–1672; these read DRVE…EVEK, PLKE…DKLE, and NDFR…KEPT.

This sequence belongs to the SNF2/RAD54 helicase family. As to quaternary structure, component of the nucleosome remodeling and deacetylase (NuRD) repressor complex, composed of core proteins MTA1, MTA2, MTA3, RBBP4, RBBP7, HDAC1, HDAC2, MBD2, MBD3, and peripherally associated proteins CDK2AP1, CDK2AP2, GATAD2A, GATAD2B, CHD3, CHD4 and CHD5. The exact stoichiometry of the NuRD complex is unknown, and some subunits such as MBD2 and MBD3, GATAD2A and GATAD2B, and CHD3, CHD4 and CHD5 define mutually exclusive NuRD complexes. Interacts with HDAC2. In terms of processing, methylated at Gln-1388 by N6AMT1. In terms of tissue distribution, expressed in brain regions enriched in neurons and not in regions rich in glial cells (at protein level).

It is found in the nucleus. It localises to the chromosome. It catalyses the reaction ATP + H2O = ADP + phosphate + H(+). Functionally, ATP-dependent chromatin-remodeling factor that binds DNA through histones and regulates gene transcription. May specifically recognize and bind trimethylated 'Lys-27' (H3K27me3) and non-methylated 'Lys-4' of histone H3. Acts as a component of the histone deacetylase NuRD complex which participates in the remodeling of chromatin. Plays a role in the development of the nervous system by activating the expression of genes promoting neuron terminal differentiation. In parallel, it may also positively regulate the trimethylation of histone H3 at 'Lys-27' thereby specifically repressing genes that promote the differentiation into non-neuronal cell lineages. Regulates the expression of genes involved in cell proliferation and differentiation. Downstream activated genes may include CDKN2A that positively regulates the p53/TP53 pathway, which in turn, prevents cell proliferation. In spermatogenesis, it probably regulates histone hyperacetylation and the replacement of histones by transition proteins in chromatin, a crucial step in the condensation of spermatid chromatin and the production of functional spermatozoa. The sequence is that of Chromodomain-helicase-DNA-binding protein 5 (Chd5) from Rattus norvegicus (Rat).